Consider the following 282-residue polypeptide: L-allo-isoleucyltransferase (282 aa).

C105 acts as the Acyl-thioester intermediate in catalysis. The AB hydrolase-1 domain maps to 169-261; it reads HTQSTYTPSD…DGQHHDFVDG (93 aa).

The protein belongs to the AB hydrolase superfamily.

The enzyme catalyses holo-[CmaD peptidyl-carrier protein] + L-alloisoleucyl-[CmaA peptidyl-carrier protein] = L-alloisoleucyl-[CmaD peptidyl-carrier protein] + holo-[CmaA peptidyl-carrier protein]. In terms of biological role, involved in the biosynthesis of the phytotoxin coronatine (COR). Catalyzes the transfer of the aminoacyl group covalently attached to the pantetheinyl arm of CmaA to the holo-pantetheinyl arm of CmaD. During the shuttling process, CmaE generates a covalent-aminoacyl-S-Cys enzyme intermediate by the action of its donor substrate L-aminoacyl-S-CmaA and delivers it to the sulfhydryl group attached to the phosphopantetheinyl arm on CmaD. The chain is L-allo-isoleucyltransferase from Pseudomonas savastanoi pv. glycinea (Pseudomonas syringae pv. glycinea).